Reading from the N-terminus, the 276-residue chain is Hydroxymethylpyrimidine/phosphomethylpyrimidine kinase (276 aa).

Gln-45 is a binding site for 4-amino-5-hydroxymethyl-2-methylpyrimidine.

It belongs to the ThiD family.

The enzyme catalyses 4-amino-5-hydroxymethyl-2-methylpyrimidine + ATP = 4-amino-2-methyl-5-(phosphooxymethyl)pyrimidine + ADP + H(+). It carries out the reaction 4-amino-2-methyl-5-(phosphooxymethyl)pyrimidine + ATP = 4-amino-2-methyl-5-(diphosphooxymethyl)pyrimidine + ADP. The protein operates within cofactor biosynthesis; thiamine diphosphate biosynthesis; 4-amino-2-methyl-5-diphosphomethylpyrimidine from 5-amino-1-(5-phospho-D-ribosyl)imidazole: step 2/3. It participates in cofactor biosynthesis; thiamine diphosphate biosynthesis; 4-amino-2-methyl-5-diphosphomethylpyrimidine from 5-amino-1-(5-phospho-D-ribosyl)imidazole: step 3/3. Catalyzes the phosphorylation of hydroxymethylpyrimidine phosphate (HMP-P) to HMP-PP, and of HMP to HMP-P. The sequence is that of Hydroxymethylpyrimidine/phosphomethylpyrimidine kinase (thiD) from Staphylococcus aureus (strain MRSA252).